A 706-amino-acid polypeptide reads, in one-letter code: Polyribonucleotide nucleotidyltransferase (706 aa).

2 residues coordinate Mg(2+): Asp487 and Asp493. One can recognise a KH domain in the interval Pro553–Ile612. Residues Gly622–Lys692 form the S1 motif domain.

The protein belongs to the polyribonucleotide nucleotidyltransferase family. Mg(2+) serves as cofactor.

It localises to the cytoplasm. It catalyses the reaction RNA(n+1) + phosphate = RNA(n) + a ribonucleoside 5'-diphosphate. Involved in mRNA degradation. Catalyzes the phosphorolysis of single-stranded polyribonucleotides processively in the 3'- to 5'-direction. The protein is Polyribonucleotide nucleotidyltransferase of Neisseria meningitidis serogroup A / serotype 4A (strain DSM 15465 / Z2491).